The following is a 315-amino-acid chain: DNA-directed RNA polymerase subunit alpha (315 aa).

The alpha N-terminal domain (alpha-NTD) stretch occupies residues 1-228; it reads MLEIEKPKIE…EHFKLFMTLT (228 aa). The tract at residues 245 to 315 is alpha C-terminal domain (alpha-CTD); sequence KEKVLEMTIE…LGLGLKKSDE (71 aa).

This sequence belongs to the RNA polymerase alpha chain family. As to quaternary structure, homodimer. The RNAP catalytic core consists of 2 alpha, 1 beta, 1 beta' and 1 omega subunit. When a sigma factor is associated with the core the holoenzyme is formed, which can initiate transcription.

It carries out the reaction RNA(n) + a ribonucleoside 5'-triphosphate = RNA(n+1) + diphosphate. DNA-dependent RNA polymerase catalyzes the transcription of DNA into RNA using the four ribonucleoside triphosphates as substrates. This chain is DNA-directed RNA polymerase subunit alpha, found in Clostridium novyi (strain NT).